A 463-amino-acid polypeptide reads, in one-letter code: L-seryl-tRNA(Sec) selenium transferase (463 aa).

Lys-295 carries the N6-(pyridoxal phosphate)lysine modification.

This sequence belongs to the SelA family. As to quaternary structure, homodecamer; pentamer of dimers. Binds only one seryl-tRNA(Sec) per dimer. Pyridoxal 5'-phosphate serves as cofactor.

The protein resides in the cytoplasm. It catalyses the reaction L-seryl-tRNA(Sec) + selenophosphate + H(+) = L-selenocysteinyl-tRNA(Sec) + phosphate. The protein operates within aminoacyl-tRNA biosynthesis; selenocysteinyl-tRNA(Sec) biosynthesis; selenocysteinyl-tRNA(Sec) from L-seryl-tRNA(Sec) (bacterial route): step 1/1. Its function is as follows. Converts seryl-tRNA(Sec) to selenocysteinyl-tRNA(Sec) required for selenoprotein biosynthesis. The protein is L-seryl-tRNA(Sec) selenium transferase of Edwardsiella ictaluri (strain 93-146).